A 373-amino-acid chain; its full sequence is ADP-forming sulfoacetate-CoA ligase subunit SauC (373 aa).

In terms of domain architecture, ATP-grasp spans 9 to 249; it reads KEAFREKGLP…YLQFNGDIAL (241 aa). Residue 35-97 coordinates ATP; the sequence is FAEVGFPCVL…EEAVDIDREI (63 aa). Mg(2+) is bound by residues glutamate 186 and asparagine 188.

Belongs to the succinate/malate CoA ligase beta subunit family. In terms of assembly, forms a complex with SauD. Mg(2+) is required as a cofactor.

The catalysed reaction is sulfoacetate + ATP + CoA = sulfoacetyl-CoA + ADP + phosphate. Involved in the degradation of sulfoacetate. Catalyzes the CoA- and ATP-dependent conversion of sulfoacetate to sulfoacetyl-CoA and ADP. Cannot use other sulfonic and carboxylic acids, and shows only residual activity with 3-sulfopropanoate and malonic acid. In Bilophila wadsworthia (strain 3_1_6), this protein is ADP-forming sulfoacetate-CoA ligase subunit SauC.